A 370-amino-acid polypeptide reads, in one-letter code: Immunoglobulin superfamily member 5 (370 aa).

The first 24 residues, methionine 1 to serine 24, serve as a signal peptide directing secretion. 2 Ig-like V-type domains span residues tyrosine 25–glutamine 125 and glycine 128–threonine 215. Residues tyrosine 25 to alanine 239 are Extracellular-facing. N-linked (GlcNAc...) asparagine glycans are attached at residues asparagine 33 and asparagine 45. Residues cysteine 46 and cysteine 109 are joined by a disulfide bond. N-linked (GlcNAc...) asparagine glycans are attached at residues asparagine 146, asparagine 196, and asparagine 217. Cysteine 149 and cysteine 201 are joined by a disulfide. A helical transmembrane segment spans residues isoleucine 240–isoleucine 260. Residues phenylalanine 261–valine 370 lie on the Cytoplasmic side of the membrane. A disordered region spans residues alanine 284–alanine 359. Over residues asparagine 289–lysine 301 the composition is skewed to basic and acidic residues.

The protein belongs to the immunoglobulin superfamily. Interacts with MAGI1 at tight junctions, forms a tripartite complex with NPHS1. Interacts with LNX1 isoform 2 via its PDZ 2 domain, it may also interact with other isoforms containing this domain. In terms of processing, N-glycosylated. As to expression, localized to kidney glomeruli and small intestinal epithelial cells. In kidney glomeruli, it is localized at slit diaphragm. Also found in spermatogonia, gonocytes, hematopoietic stem cells and Sertoli cells.

It localises to the apical cell membrane. It is found in the cell junction. Its subcellular location is the tight junction. Its function is as follows. Provides, together with MAGI1, an adhesion machinery at tight junctions, which may regulate the permeability of kidney glomerulus and small intestinal epithelial cells. Mediates calcium-independent homophilic cell adhesion. In testis, it may function as a cell adhesion molecule rather than a tight-junction protein. It may participate in the adhesion between spermatogonia-spermatogonia, spermatogonia-Sertoli cells, and Sertoli cells-Sertoli cells. The polypeptide is Immunoglobulin superfamily member 5 (Igsf5) (Mus musculus (Mouse)).